The following is a 188-amino-acid chain: MIGDIIAQRYAQALFDLGKEQSLHEVELYDTALSQIEELLMTSNELTYFLHAPIFTIYEKQGVLLKLLELIDAAQPIKNFCLLLAEKERLPLLTQIINSFKVLLDNAKNIVHGQLITAITLDEKKQSELLISLEKQTNRKLELLFQVNPDILGGIVLHIGDKVFDASLRTQLECIRNTIKKGETNHAY.

The protein belongs to the ATPase delta chain family. As to quaternary structure, F-type ATPases have 2 components, F(1) - the catalytic core - and F(0) - the membrane proton channel. F(1) has five subunits: alpha(3), beta(3), gamma(1), delta(1), epsilon(1). F(0) has three main subunits: a(1), b(2) and c(10-14). The alpha and beta chains form an alternating ring which encloses part of the gamma chain. F(1) is attached to F(0) by a central stalk formed by the gamma and epsilon chains, while a peripheral stalk is formed by the delta and b chains.

It localises to the cell membrane. F(1)F(0) ATP synthase produces ATP from ADP in the presence of a proton or sodium gradient. F-type ATPases consist of two structural domains, F(1) containing the extramembraneous catalytic core and F(0) containing the membrane proton channel, linked together by a central stalk and a peripheral stalk. During catalysis, ATP synthesis in the catalytic domain of F(1) is coupled via a rotary mechanism of the central stalk subunits to proton translocation. Its function is as follows. This protein is part of the stalk that links CF(0) to CF(1). It either transmits conformational changes from CF(0) to CF(1) or is implicated in proton conduction. This chain is ATP synthase subunit delta, found in Lawsonia intracellularis (strain PHE/MN1-00).